Reading from the N-terminus, the 114-residue chain is uncharacterized protein (114 aa).

An HTH arsR-type domain is found at Glu-2–Leu-97. A DNA-binding region (H-T-H motif) is located at residues Gly-37 to Arg-60.

This is an uncharacterized protein from Mycobacterium tuberculosis (strain CDC 1551 / Oshkosh).